A 394-amino-acid chain; its full sequence is Elongation factor Tu (394 aa).

One can recognise a tr-type G domain in the interval 10–204 (KPHVNVGTIG…ALDSYIPTPE (195 aa)). The G1 stretch occupies residues 19–26 (GHVDHGKT). Residue 19–26 (GHVDHGKT) coordinates GTP. Threonine 26 provides a ligand contact to Mg(2+). The segment at 60–64 (GITIN) is G2. Positions 81–84 (DCPG) are G3. Residues 81 to 85 (DCPGH) and 136 to 139 (NKCD) contribute to the GTP site. The segment at 136–139 (NKCD) is G4. A G5 region spans residues 174–176 (SAL).

The protein belongs to the TRAFAC class translation factor GTPase superfamily. Classic translation factor GTPase family. EF-Tu/EF-1A subfamily. In terms of assembly, monomer.

The protein localises to the cytoplasm. The enzyme catalyses GTP + H2O = GDP + phosphate + H(+). GTP hydrolase that promotes the GTP-dependent binding of aminoacyl-tRNA to the A-site of ribosomes during protein biosynthesis. The protein is Elongation factor Tu of Neisseria gonorrhoeae (strain ATCC 700825 / FA 1090).